Reading from the N-terminus, the 713-residue chain is G-protein coupled receptor-associated protein LMBRD2 (713 aa).

Over 1-3 the chain is Extracellular; that stretch reads MSG. Residues 4-21 form a helical membrane-spanning segment; that stretch reads VALGIEIVSVFFLALFLL. At 22-32 the chain is on the cytoplasmic side; the sequence is HRYGDFKKQHK. Residues 33–53 traverse the membrane as a helical segment; the sequence is LVIVGTLLAWYLCFLIVFIIP. Topologically, residues 54–122 are extracellular; the sequence is LDVSTTIYNR…SKPWSYIPRG (69 aa). 2 N-linked (GlcNAc...) asparagine glycosylation sites follow: N76 and N89. The helical transmembrane segment at 123–143 threads the bilayer; that stretch reads IMPIFWRVVYWTSQFLTWILM. Residues 144–167 are Cytoplasmic-facing; sequence PFMQSYARSGGFSITGKIKTALIE. A helical transmembrane segment spans residues 168–188; sequence NAIYYGTYLLIFGALLIYVAV. Over 189 to 203 the chain is Extracellular; the sequence is NPNLHLEWYQLQTIG. The chain crosses the membrane as a helical span at residues 204–224; sequence IAAANTWGLFLLVLLMGYGLV. Residues 225–404 are Cytoplasmic-facing; that stretch reads EIPRSQWNGA…ECLLRPWCSR (180 aa). A coiled-coil region spans residues 246–314; sequence KAAKLMTEKA…DDYEDFEEKN (69 aa). Residues 405-425 form a helical membrane-spanning segment; the sequence is ILAVILALFSTVVVWSECTFF. Over 426-449 the chain is Extracellular; the sequence is SAKPVLSLFAVFIQQAEQTHNYIY. The helical transmembrane segment at 450 to 470 threads the bilayer; that stretch reads VEVVCFLSIFFLSICVYSTVF. Over 471 to 490 the chain is Cytoplasmic; it reads RIRVFNYYYLASHHQTDAYS. The chain crosses the membrane as a helical span at residues 491–511; it reads LLFSGMLFCRLTPPLCLNFLG. The Extracellular segment spans residues 512–538; that stretch reads LTHMDVSISHQNIEPTAYTSIMGSLRV. The helical transmembrane segment at 539–559 threads the bilayer; the sequence is LPLIADVFYIYYPMLVLILCI. Topologically, residues 560–713 are cytoplasmic; the sequence is ATYFSLGTRC…QSNSRIFDDV (154 aa). Positions 587-620 form a coiled coil; it reads DLTDEGKELIKREKRKRQRLEDGETRRREWKERY. The segment at 600-713 is disordered; the sequence is KRKRQRLEDG…QSNSRIFDDV (114 aa). Residues 605-629 are compositionally biased toward basic and acidic residues; sequence RLEDGETRRREWKERYPTNREDTSR. The segment covering 643–657 has biased composition (polar residues); sequence TEMTTNRSSKYTRAS. A compositionally biased stretch (basic and acidic residues) spans 658–667; that stretch reads NRTERDRIEL. Polar residues predominate over residues 701–713; that stretch reads SMSQSNSRIFDDV.

This sequence belongs to the LIMR family.

The protein localises to the cell membrane. May associate with G-protein coupled receptors and regulate downstream signaling pathways. The polypeptide is G-protein coupled receptor-associated protein LMBRD2 (lmbrd2) (Xenopus laevis (African clawed frog)).